We begin with the raw amino-acid sequence, 638 residues long: Acetolactate synthase 2, chloroplastic (638 aa).

The transit peptide at 1–39 (MATAATAAAALTGATTATPKSRRRAHHLATRRALAAPIR) directs the protein to the chloroplast. The interval 44-67 (SRATPTAPPATPLRPWGPNEPRKG) is disordered. Thiamine diphosphate is bound at residue Glu112. A disulfide bond links Cys132 and Cys278. FAD contacts are provided by residues Arg214, 320-341 (HGTVYANYAVDKADLLLAFGVR), and 363-382 (DIDPAEIGKNKQPHVSICAD). Positions 455 to 535 (QHQMWAAQYY…VKVFVLNNQH (81 aa)) are thiamine pyrophosphate binding. Mg(2+)-binding residues include Asp506 and Asn533.

This sequence belongs to the TPP enzyme family. The cofactor is Mg(2+). Requires thiamine diphosphate as cofactor.

The protein localises to the plastid. Its subcellular location is the chloroplast. It catalyses the reaction 2 pyruvate + H(+) = (2S)-2-acetolactate + CO2. It participates in amino-acid biosynthesis; L-isoleucine biosynthesis; L-isoleucine from 2-oxobutanoate: step 1/4. The protein operates within amino-acid biosynthesis; L-valine biosynthesis; L-valine from pyruvate: step 1/4. This Zea mays (Maize) protein is Acetolactate synthase 2, chloroplastic (ALS2).